The following is a 160-amino-acid chain: Type IV major fimbrial protein FimA (160 aa).

The propeptide at 1-7 is leader sequence; that stretch reads MKSLQKG. At Phe-8 the chain carries N-methylphenylalanine. Residues 8–28 form a helical membrane-spanning segment; sequence FTLIELMIVVAIIGILAAFAI. Cys-63 and Cys-106 are oxidised to a cystine.

This sequence belongs to the N-Me-Phe pilin family. As to quaternary structure, the pili are polar flexible filaments of about 5.4 nanometers diameter and 2.5 micrometers average length; they consist of only a single polypeptide chain arranged in a helical configuration of five subunits per turn in the assembled pilus.

Its subcellular location is the fimbrium. It is found in the membrane. Its function is as follows. Major component of the type IV fimbriae that plays an essential role in twitching motility, natural transformation, and protease secretion. The chain is Type IV major fimbrial protein FimA (fimA) from Dichelobacter nodosus (Bacteroides nodosus).